The sequence spans 629 residues: Chaperone protein HtpG (629 aa).

Residues 1-335 (MSSNPTSSVR…TEDLPLNVSR (335 aa)) form an a; substrate-binding region. Positions 336–547 (ELVQASPVMA…KDALDSQFEK (212 aa)) are b. The tract at residues 548 to 629 (MMKMMNKDAD…NELVEAATRS (82 aa)) is c.

It belongs to the heat shock protein 90 family. As to quaternary structure, homodimer.

The protein localises to the cytoplasm. In terms of biological role, molecular chaperone. Has ATPase activity. The sequence is that of Chaperone protein HtpG from Chlorobaculum tepidum (strain ATCC 49652 / DSM 12025 / NBRC 103806 / TLS) (Chlorobium tepidum).